Here is a 303-residue protein sequence, read N- to C-terminus: Ribonuclease Z (303 aa).

H61, H63, D65, H66, H138, D206, and H265 together coordinate Zn(2+). D65 acts as the Proton acceptor in catalysis.

The protein belongs to the RNase Z family. As to quaternary structure, homodimer. Zn(2+) serves as cofactor.

It catalyses the reaction Endonucleolytic cleavage of RNA, removing extra 3' nucleotides from tRNA precursor, generating 3' termini of tRNAs. A 3'-hydroxy group is left at the tRNA terminus and a 5'-phosphoryl group is left at the trailer molecule.. Its function is as follows. Zinc phosphodiesterase, which displays some tRNA 3'-processing endonuclease activity. Probably involved in tRNA maturation, by removing a 3'-trailer from precursor tRNA. This Agathobacter rectalis (strain ATCC 33656 / DSM 3377 / JCM 17463 / KCTC 5835 / VPI 0990) (Eubacterium rectale) protein is Ribonuclease Z.